The chain runs to 341 residues: tRNA N6-adenosine threonylcarbamoyltransferase (341 aa).

2 residues coordinate Fe cation: His115 and His119. Substrate-binding positions include 137-141, Asp170, Gly183, Asp187, and Asn276; that span reads IVSGG. Asp304 serves as a coordination point for Fe cation.

Belongs to the KAE1 / TsaD family. Fe(2+) serves as cofactor.

Its subcellular location is the cytoplasm. The enzyme catalyses L-threonylcarbamoyladenylate + adenosine(37) in tRNA = N(6)-L-threonylcarbamoyladenosine(37) in tRNA + AMP + H(+). Required for the formation of a threonylcarbamoyl group on adenosine at position 37 (t(6)A37) in tRNAs that read codons beginning with adenine. Is involved in the transfer of the threonylcarbamoyl moiety of threonylcarbamoyl-AMP (TC-AMP) to the N6 group of A37, together with TsaE and TsaB. TsaD likely plays a direct catalytic role in this reaction. The chain is tRNA N6-adenosine threonylcarbamoyltransferase from Staphylococcus aureus (strain bovine RF122 / ET3-1).